A 499-amino-acid chain; its full sequence is MKRSISIFITCLLITLLTMGGMIASPASAAGTKTPVAKNGQLSIKGTQLVNRDGKAVQLKGISSHGLQWYGEYVNKDSLKWLRDDWGITVFRAAMYTADGGYIDNPSVKNKVKEAVEAAKELGIYVIIDWHILNDGNPNQNKEKAKEFFKEMSSLYGNTPNVIYEIANEPNGDVNWKRDIKPYAEEVISVIRKNDPDNIIIVGTGTWSQDVNDAADDQLKDANVMYALHFYAGTHGQFLRDKANYALSKGAPIFVTEWGTSDASGNGGVFLDQSREWLKYLDSKTISWVNWNLSDKQESSSALKPGASKTGGWRLSDLSASGTFVRENILGTKDSTKDIPETPSKDKPTQENGISVQYRAGDGSMNSNQIRPQLQIKNNGNTTVDLKDVTARYWYKAKNKGQNFDCDYAQIGCGNVTHKFVTLHKPKQGADTYLELGFKNGTLAPGASTGNIQLRLHNDDWSNYAQSGDYSFFKSNTFKTTKKITLYDQGKLIWGTEPN.

An N-terminal signal peptide occupies residues 1–29 (MKRSISIFITCLLITLLTMGGMIASPASA). Substrate contacts are provided by residues H65, 69–70 (WY), Y96, and H131. Catalysis depends on E169, which acts as the Proton donor. Residue Y231 coordinates substrate. The active-site Nucleophile is the E257. Residues 263–264 (AS), W291, and 296–298 (KQE) contribute to the substrate site. One can recognise a CBM3 domain in the interval 350–499 (QENGISVQYR…GKLIWGTEPN (150 aa)).

Belongs to the glycosyl hydrolase 5 (cellulase A) family.

The catalysed reaction is Endohydrolysis of (1-&gt;4)-beta-D-glucosidic linkages in cellulose, lichenin and cereal beta-D-glucans.. This Bacillus subtilis (strain 168) protein is Endoglucanase (eglS).